A 274-amino-acid chain; its full sequence is Diaminopimelate epimerase (274 aa).

Substrate is bound by residues Asn11, Gln44, and Asn64. Cys73 functions as the Proton donor in the catalytic mechanism. Substrate-binding positions include 74–75 (GN), Asn157, Asn190, and 208–209 (ER). Cys217 acts as the Proton acceptor in catalysis. 218-219 (GS) provides a ligand contact to substrate.

It belongs to the diaminopimelate epimerase family. Homodimer.

The protein resides in the cytoplasm. The enzyme catalyses (2S,6S)-2,6-diaminopimelate = meso-2,6-diaminopimelate. Its pathway is amino-acid biosynthesis; L-lysine biosynthesis via DAP pathway; DL-2,6-diaminopimelate from LL-2,6-diaminopimelate: step 1/1. Functionally, catalyzes the stereoinversion of LL-2,6-diaminopimelate (L,L-DAP) to meso-diaminopimelate (meso-DAP), a precursor of L-lysine and an essential component of the bacterial peptidoglycan. The polypeptide is Diaminopimelate epimerase (Salmonella agona (strain SL483)).